A 279-amino-acid chain; its full sequence is MSAQSKSPTKARRITAPDIRARKGGEPLVCLTAYDAPMARILDPHCDLLLVGDSVGMVVHGLDSTVGVTLDMMILHGQAVMRGARQALVAVDMPFGSYEQSPEQAFANAARVMAETGCQAIKIESGTYAADTIRFMAARSIPVIGHIGLRPQAALADGGFRAKGRTQAERQRVIDEALATAEAGAFAIVIEGVAEDLAREITETVDVPTIGIGASAACDGQILVTQDMLGVFDWTPKFVKRYDNMAERTDAAVAQFASDVRDRSFPSQREVYTMKRSDG.

The Mg(2+) site is built by aspartate 53 and aspartate 92. 3-methyl-2-oxobutanoate-binding positions include 53–54 (DS), aspartate 92, and lysine 122. Residue glutamate 124 coordinates Mg(2+). Glutamate 191 serves as the catalytic Proton acceptor.

Belongs to the PanB family. Homodecamer; pentamer of dimers. Mg(2+) is required as a cofactor.

The protein localises to the cytoplasm. The enzyme catalyses 3-methyl-2-oxobutanoate + (6R)-5,10-methylene-5,6,7,8-tetrahydrofolate + H2O = 2-dehydropantoate + (6S)-5,6,7,8-tetrahydrofolate. Its pathway is cofactor biosynthesis; (R)-pantothenate biosynthesis; (R)-pantoate from 3-methyl-2-oxobutanoate: step 1/2. Catalyzes the reversible reaction in which hydroxymethyl group from 5,10-methylenetetrahydrofolate is transferred onto alpha-ketoisovalerate to form ketopantoate. This Maricaulis maris (strain MCS10) (Caulobacter maris) protein is 3-methyl-2-oxobutanoate hydroxymethyltransferase.